A 946-amino-acid polypeptide reads, in one-letter code: Glucoamylase 1 (946 aa).

The first 20 residues, 1-20 (MKLLSKVFVTALGLTSIVNA), serve as a signal peptide directing secretion. Asn51, Asn68, Asn97, Asn187, Asn244, Asn373, Asn393, Asn406, and Asn437 each carry an N-linked (GlcNAc...) asparagine glycan. Residues Asp462 and Glu465 contribute to the active site. Residue Asn505 is glycosylated (N-linked (GlcNAc...) asparagine). Over residues 517–532 (AATKTTTTTSSSTSTS) the composition is skewed to low complexity. The tract at residues 517 to 541 (AATKTTTTTSSSTSTSIDGKNTLAP) is disordered. Asn570 is a glycosylation site (N-linked (GlcNAc...) asparagine). Catalysis depends on Asp628, which acts as the Proton donor. N-linked (GlcNAc...) asparagine glycans are attached at residues Asn704, Asn772, Asn801, Asn895, and Asn912.

The protein belongs to the glycosyl hydrolase 31 family. In terms of processing, the N-terminus is blocked.

The protein resides in the secreted. It localises to the cell wall. The protein localises to the membrane. It catalyses the reaction Hydrolysis of terminal (1-&gt;4)-linked alpha-D-glucose residues successively from non-reducing ends of the chains with release of beta-D-glucose.. This chain is Glucoamylase 1 (GAM1), found in Candida albicans (strain SC5314 / ATCC MYA-2876) (Yeast).